Here is a 639-residue protein sequence, read N- to C-terminus: tRNA 5-methylaminomethyl-2-thiouridine biosynthesis bifunctional protein MnmC (639 aa).

A tRNA (mnm(5)s(2)U34)-methyltransferase region spans residues 1–228 (MSEPIEWLED…KRDNLQATYA (228 aa)). Residues 254-639 (VGAGLAGAAV…SERWLGYEPQ (386 aa)) form an FAD-dependent cmnm(5)s(2)U34 oxidoreductase region.

The protein in the N-terminal section; belongs to the methyltransferase superfamily. tRNA (mnm(5)s(2)U34)-methyltransferase family. It in the C-terminal section; belongs to the DAO family. It depends on FAD as a cofactor.

Its subcellular location is the cytoplasm. The enzyme catalyses 5-aminomethyl-2-thiouridine(34) in tRNA + S-adenosyl-L-methionine = 5-methylaminomethyl-2-thiouridine(34) in tRNA + S-adenosyl-L-homocysteine + H(+). In terms of biological role, catalyzes the last two steps in the biosynthesis of 5-methylaminomethyl-2-thiouridine (mnm(5)s(2)U) at the wobble position (U34) in tRNA. Catalyzes the FAD-dependent demodification of cmnm(5)s(2)U34 to nm(5)s(2)U34, followed by the transfer of a methyl group from S-adenosyl-L-methionine to nm(5)s(2)U34, to form mnm(5)s(2)U34. The protein is tRNA 5-methylaminomethyl-2-thiouridine biosynthesis bifunctional protein MnmC of Acidovorax sp. (strain JS42).